The following is a 1414-amino-acid chain: Phenyloxazoline synthase MbtB (1414 aa).

Positions 5-78 (TACSEIIRAE…AWSQLVSAGT (74 aa)) constitute a Carrier 1 domain. Ser39 bears the O-(pantetheine 4'-phosphoryl)serine mark. A condensation/cyclization region spans residues 96–394 (EGEPFPLAPM…SSLLLDVDLT (299 aa)). An adenylation region spans residues 579–975 (SYAQLRDQAS…RLPGVHAAAA (397 aa)). A Carrier 2 domain is found at 1057–1135 (APRTVLQRAL…ALAQLLTGRE (79 aa)). An O-(pantetheine 4'-phosphoryl)serine modification is found at Ser1094. The thioesterase stretch occupies residues 1188–1413 (GAVLVFPHAG…AVARMVSADV (226 aa)).

This sequence belongs to the ATP-dependent AMP-binding enzyme family. MbtB subfamily. It depends on pantetheine 4'-phosphate as a cofactor. Post-translationally, 4'-phosphopantetheine is transferred from CoA to a specific serine in each of the two carrier protein domains, leading to their activation from apo to holo forms.

It functions in the pathway siderophore biosynthesis; mycobactin biosynthesis. Its function is as follows. Involved in the initial steps of the mycobactin biosynthetic pathway. Putatively couples activated salicylic acid with serine or threonine and cyclizes this precursor to the hydroxyphenyloxazoline ring system present in this class of siderophores. Essential for growth in macrophages. This Mycobacterium tuberculosis (strain ATCC 25618 / H37Rv) protein is Phenyloxazoline synthase MbtB (mbtB).